A 105-amino-acid polypeptide reads, in one-letter code: Large ribosomal subunit protein uL24 (105 aa).

It belongs to the universal ribosomal protein uL24 family. As to quaternary structure, part of the 50S ribosomal subunit.

In terms of biological role, one of two assembly initiator proteins, it binds directly to the 5'-end of the 23S rRNA, where it nucleates assembly of the 50S subunit. Its function is as follows. One of the proteins that surrounds the polypeptide exit tunnel on the outside of the subunit. The sequence is that of Large ribosomal subunit protein uL24 from Vibrio atlanticus (strain LGP32) (Vibrio splendidus (strain Mel32)).